A 507-amino-acid polypeptide reads, in one-letter code: ATP synthase subunit alpha, chloroplastic (507 aa).

170-177 (GDRQTGKT) provides a ligand contact to ATP.

The protein belongs to the ATPase alpha/beta chains family. In terms of assembly, F-type ATPases have 2 components, CF(1) - the catalytic core - and CF(0) - the membrane proton channel. CF(1) has five subunits: alpha(3), beta(3), gamma(1), delta(1), epsilon(1). CF(0) has four main subunits: a, b, b' and c.

The protein localises to the plastid. The protein resides in the chloroplast thylakoid membrane. It carries out the reaction ATP + H2O + 4 H(+)(in) = ADP + phosphate + 5 H(+)(out). Functionally, produces ATP from ADP in the presence of a proton gradient across the membrane. The alpha chain is a regulatory subunit. This is ATP synthase subunit alpha, chloroplastic from Morus indica (Mulberry).